Consider the following 627-residue polypeptide: 1-deoxy-D-xylulose-5-phosphate synthase (627 aa).

Thiamine diphosphate contacts are provided by residues H80 and G121 to S123. D152 is a binding site for Mg(2+). Thiamine diphosphate-binding positions include G153–A154, N181, Y288, and E370. A Mg(2+)-binding site is contributed by N181.

Belongs to the transketolase family. DXPS subfamily. As to quaternary structure, homodimer. The cofactor is Mg(2+). Thiamine diphosphate serves as cofactor.

The catalysed reaction is D-glyceraldehyde 3-phosphate + pyruvate + H(+) = 1-deoxy-D-xylulose 5-phosphate + CO2. It functions in the pathway metabolic intermediate biosynthesis; 1-deoxy-D-xylulose 5-phosphate biosynthesis; 1-deoxy-D-xylulose 5-phosphate from D-glyceraldehyde 3-phosphate and pyruvate: step 1/1. Functionally, catalyzes the acyloin condensation reaction between C atoms 2 and 3 of pyruvate and glyceraldehyde 3-phosphate to yield 1-deoxy-D-xylulose-5-phosphate (DXP). This Aliivibrio salmonicida (strain LFI1238) (Vibrio salmonicida (strain LFI1238)) protein is 1-deoxy-D-xylulose-5-phosphate synthase.